Consider the following 394-residue polypeptide: A-type flagellin (394 aa).

This sequence belongs to the bacterial flagellin family. In terms of processing, phosphorylated on tyrosine residue(s). Post-translationally, flagellin from strain 5939 but not from strain 170018 is glycosylated.

Its subcellular location is the secreted. The protein resides in the bacterial flagellum. Its function is as follows. Flagellin is the subunit protein which polymerizes to form the filaments of bacterial flagella. This Pseudomonas aeruginosa protein is A-type flagellin (fliC).